Consider the following 803-residue polypeptide: DNA polymerase 2 (803 aa).

Belongs to the DNA polymerase type-B family.

It carries out the reaction DNA(n) + a 2'-deoxyribonucleoside 5'-triphosphate = DNA(n+1) + diphosphate. The chain is DNA polymerase 2 (polB) from Aeropyrum pernix (strain ATCC 700893 / DSM 11879 / JCM 9820 / NBRC 100138 / K1).